We begin with the raw amino-acid sequence, 346 residues long: MVWLANPERYGQMQYRYCGKSGLRLPALSLGLWHNFGHVNALESQRAILRKAFDLGITHFDLANNYGPPPGSAEENFGRLLREDFAAYRDELIISTKAGYDMWPGPYGSGGSRKYLLASLDQSLKRMGLEYVDIFYSHRVDENTPMEETASALAHAVQSGKALYVGISSYSPERTQKMVELLHEWKIPLLIHQPSYNLLNRWVDKSGLLDTLQNNGVGCIAFTPLAQGLLTGKYLNGIPEDSRMHREGNKVRGLTPKMLTEANLNSLRLLNEMAQQRGQSMAQMALSWLLKDERVTSVLVGASRAEQLEENVQALNNLTFSTEELAQIDQHIADGELNLWQASSDK.

NADP(+)-binding residues include Trp33, Asp61, Tyr66, Ser168, Gln193, Thr223, Leu225, Gln227, Lys233, Ser303, Gln307, and Asn311.

It belongs to the shaker potassium channel beta subunit family.

It carries out the reaction a primary alcohol + NADP(+) = an aldehyde + NADPH + H(+). Functionally, aldo-keto reductase that catalyzes the stereospecific, NADPH-dependent reduction of L-glyceraldehyde 3-phosphate (L-GAP) to L-glycerol 3-phosphate (L-G3P). The sequence is that of L-glyceraldehyde 3-phosphate reductase from Escherichia coli O157:H7.